The primary structure comprises 501 residues: Nuclear receptor subfamily 5 group A member 2 (501 aa).

Residues 43–114 constitute a DNA-binding region (nuclear receptor); the sequence is EELCPVCGDK…KCLSVGMKLE (72 aa). Positions 46, 49, 63, 66, 82, 88, 98, and 101 each coordinate Zn(2+). 2 consecutive NR C4-type zinc fingers follow at residues 46–66 and 82–106; these read CPVC…CESC and CIEN…FQKC. Residues 112-127 are C-terminal extension (CTE); it reads KLEAVRADRMRGGRNK. An FTZ-F1 box motif is present at residues 128-147; that stretch reads FGPMYKRDRALKQQKKALIR. A disordered region spans residues 186 to 207; the sequence is NHTALPPTDYDRSPFVTSPISM. The 240-residue stretch at 260 to 499 folds into the NR LBD domain; that stretch reads SIPHLILELQ…NLLIEMLHAK (240 aa). A phospholipid derivative contacts are provided by residues 381–384, tyrosine 476, and lysine 480; that span reads GATL. An AF-2 region spans residues 488–499; that stretch reads CNNLLIEMLHAK.

It belongs to the nuclear hormone receptor family. NR5 subfamily. Monomer; Binds DNA as a monomer. As to expression, detected in liver and adrenal gland.

It is found in the nucleus. The protein resides in the chromosome. Orphan nuclear receptor that binds DNA as a monomer to the 5'-TCAAGGCCA-3' sequence and controls expression of target genes: regulates key biological processes, such as cholesterol and bile acid synthesis pathways, as well as cartilage, liver and pancreas morphogenesis. Ligand-binding causes conformational change which causes recruitment of coactivators, promoting target gene activation. The specific ligand is unknown, but specific phospholipids, such as phosphatidylethanolamine, phosphatidylserine, dilauroyl phosphatidylcholine and diundecanoyl phosphatidylcholine can act as ligand in vitro. Acts as a pioneer transcription factor, which unwraps target DNA from histones and elicits local opening of closed chromatin. Involved in the formation of connective tissue in lower jaw. The protein is Nuclear receptor subfamily 5 group A member 2 of Gallus gallus (Chicken).